A 452-amino-acid polypeptide reads, in one-letter code: Cell division protein FtsZ (452 aa).

Residues 24-28 (GAGSN), 111-113 (GTG), Glu142, Arg146, and Asp190 each bind GTP. A disordered region spans residues 432–452 (DQDNKESDIHDIPAFLRKKRD). The segment covering 433 to 442 (QDNKESDIHD) has biased composition (basic and acidic residues).

This sequence belongs to the FtsZ family. In terms of assembly, homodimer. Polymerizes to form a dynamic ring structure in a strictly GTP-dependent manner. Interacts directly with several other division proteins.

The protein localises to the cytoplasm. Its function is as follows. Essential cell division protein that forms a contractile ring structure (Z ring) at the future cell division site. The regulation of the ring assembly controls the timing and the location of cell division. One of the functions of the FtsZ ring is to recruit other cell division proteins to the septum to produce a new cell wall between the dividing cells. Binds GTP and shows GTPase activity. The chain is Cell division protein FtsZ from Rickettsia conorii (strain ATCC VR-613 / Malish 7).